Reading from the N-terminus, the 74-residue chain is Protein krueppel (74 aa).

4 C2H2-type zinc fingers span residues 1-4, 10-32, 38-60, and 66-74; these read ERTH, FECP…MRLH, YHCS…LRVH, and YTCEICDGK.

This sequence belongs to the krueppel C2H2-type zinc-finger protein family.

The protein resides in the nucleus. Its function is as follows. Krueppel is a gap class segmentation protein. This chain is Protein krueppel (Kr), found in Musca domestica (House fly).